Here is a 154-residue protein sequence, read N- to C-terminus: UPF0225 protein SG1365 (154 aa).

Belongs to the UPF0225 family.

This chain is UPF0225 protein SG1365, found in Sodalis glossinidius (strain morsitans).